A 320-amino-acid chain; its full sequence is Mitochondrial oxaloacetate transport protein (320 aa).

Solcar repeat units lie at residues 21-114 (LGPV…IRRT), 126-218 (NKLA…AKRM), and 227-313 (EGMI…TNKL). The next 6 membrane-spanning stretches (helical) occupy residues 26-47 (GFLSGGLAACGAVTLTNPFEVI), 91-111 (GTAYVYQICLNGCRLGFYEPI), 129-145 (AINVASGAGSGLCGALF), 197-217 (AILRTVSGSSVQLPIYNWAKR), 233-253 (LTASAVSGFGVCCTMQIFDTV), and 285-306 (LYKGFGAHLARIAPHTIFCLTF).

It belongs to the mitochondrial carrier (TC 2.A.29) family.

It is found in the mitochondrion inner membrane. The catalysed reaction is a dicarboxylate(in) + sulfate(out) = a dicarboxylate(out) + sulfate(in). It catalyses the reaction (2S)-2-isopropylmalate(in) + sulfate(out) = (2S)-2-isopropylmalate(out) + sulfate(in). It carries out the reaction (2R,3S)-3-isopropylmalate(in) + sulfate(out) = (2R,3S)-3-isopropylmalate(out) + sulfate(in). The enzyme catalyses malonate(in) + sulfate(out) = malonate(out) + sulfate(in). The catalysed reaction is oxaloacetate(in) + sulfate(out) = oxaloacetate(out) + sulfate(in). It catalyses the reaction thiosulfate(in) + sulfate(out) = thiosulfate(out) + sulfate(in). Antiporter that exchanges dicarboxylates and sulfur oxoanions across the inner membrane of mitochondria. Exports alpha-isopropylmalate from mitochondrial matrix to the cytosol, where it serves as a precursor for leucine biosynthesis. This chain is Mitochondrial oxaloacetate transport protein (oac1), found in Schizosaccharomyces pombe (strain 972 / ATCC 24843) (Fission yeast).